A 462-amino-acid polypeptide reads, in one-letter code: Glycine--tRNA ligase (462 aa).

Residues arginine 100 and glutamate 174 each coordinate substrate. Residues 206 to 208 (RNE), 216 to 221 (FRTREF), 290 to 291 (EL), and 334 to 337 (GADR) contribute to the ATP site. 221-225 (FEQME) serves as a coordination point for substrate. Residue 330–334 (EPSLG) coordinates substrate.

It belongs to the class-II aminoacyl-tRNA synthetase family. In terms of assembly, homodimer.

Its subcellular location is the cytoplasm. The enzyme catalyses tRNA(Gly) + glycine + ATP = glycyl-tRNA(Gly) + AMP + diphosphate. Functionally, catalyzes the attachment of glycine to tRNA(Gly). The protein is Glycine--tRNA ligase of Alkaliphilus metalliredigens (strain QYMF).